A 321-amino-acid polypeptide reads, in one-letter code: Sphingolipid delta(4)-desaturase DES1 (321 aa).

A run of 6 helical transmembrane segments spans residues 41–61 (PNFKWVAGAMVLTQILALFVV), 68–88 (WLIVAAYCFGGIINHSLMLAV), 107–127 (ILGFICNLPIGLPMSISFKKY), 157–177 (FGKFLWVCLQPFFYIFRPLII), 187–206 (IINTVVQLTFNALIVYFLGW), and 208–230 (PLAYLLIGSILAMGLHPVAGHFI).

It belongs to the fatty acid desaturase type 1 family. DEGS subfamily. As to expression, testes.

It is found in the endoplasmic reticulum membrane. The protein localises to the membrane. The protein resides in the mitochondrion. It catalyses the reaction an N-acylsphinganine + 2 Fe(II)-[cytochrome b5] + O2 + 2 H(+) = an N-acylsphing-4-enine + 2 Fe(III)-[cytochrome b5] + 2 H2O. It carries out the reaction an N-acyleicosasphinganine + 2 Fe(II)-[cytochrome b5] + O2 + 2 H(+) = an N-acyleicosasphing-4-enine + 2 Fe(III)-[cytochrome b5] + 2 H2O. Its pathway is sphingolipid metabolism. Functionally, has sphingolipid-delta-4-desaturase activity. Converts sphinganine-containing sphingolipids (such as N-acylsphinganines or dihydroceramides) into sphingolipids containing the delta-4-desaturated sphingoid base (E)-sphing-4-enine (such as N-acylsphing-4-enines or ceramides), which are required for many different functions (structural functions as well as signaling). Required to initiate spermatid differentiation among other signals. Required for central spindle assembly and cytokinesis during male meiosis, may act as part of an anchoring mechanism that links membrane-bounded cellular compartments to components of the cytoskeleton. This Drosophila melanogaster (Fruit fly) protein is Sphingolipid delta(4)-desaturase DES1.